Consider the following 637-residue polypeptide: Probable potassium transport system protein Kup 2 (637 aa).

Residues 1–21 form a disordered region; it reads MDLASRDSEAETVEQSSHSGA. A run of 12 helical transmembrane segments spans residues 29 to 49, 68 to 88, 116 to 136, 150 to 170, 180 to 200, 228 to 248, 258 to 278, 300 to 320, 359 to 379, 381 to 401, 409 to 429, and 434 to 454; these read LMLG…IYAF, VLSL…VAFV, LILA…IITP, VTPT…AILF, VAAV…VAGL, AAFV…ALYV, IVLA…FGQG, ALMP…QAVI, LLVA…SSLA, AYGI…FVVM, LAVA…FFLA, and IFEG…IMWT.

It belongs to the HAK/KUP transporter (TC 2.A.72) family.

Its subcellular location is the cell inner membrane. It carries out the reaction K(+)(in) + H(+)(in) = K(+)(out) + H(+)(out). Its function is as follows. Transport of potassium into the cell. Likely operates as a K(+):H(+) symporter. This Mesorhizobium japonicum (strain LMG 29417 / CECT 9101 / MAFF 303099) (Mesorhizobium loti (strain MAFF 303099)) protein is Probable potassium transport system protein Kup 2.